Consider the following 448-residue polypeptide: F-box/FBD/LRR-repeat protein At2g04230 (448 aa).

The 53-residue stretch at 12–64 folds into the F-box domain; that stretch reads EDRISDLPDALLLQILSSLPTENAIATSVLSKRWRSLWTMLPKLKFDSNFNPV. LRR repeat units follow at residues 72–98, 149–176, 177–202, 204–225, 226–251, 271–296, and 319–345; these read PTMF…HLSF, ILKL…YLDQ, VHFK…VVHR, SNAD…TIED, LRQE…NING, ISNV…ILHL, and THER…KLTD. The 52-residue stretch at 359 to 410 folds into the FBD domain; it reads KWNPPKCAPECLLFHLETFLWIGYEWQRGDEKEVATYILENARRLKKATFST.

The protein is F-box/FBD/LRR-repeat protein At2g04230 of Arabidopsis thaliana (Mouse-ear cress).